A 546-amino-acid chain; its full sequence is Chaperonin GroEL 1 (546 aa).

ATP is bound by residues 29 to 32, 86 to 90, glycine 413, 477 to 479, and aspartate 493; these read TIGP, DGTTT, and NAA. A disordered region spans residues 523–546; sequence PAEPAPQDGHGHGHGHSHPQGPGF.

The protein belongs to the chaperonin (HSP60) family. Forms a cylinder of 14 subunits composed of two heptameric rings stacked back-to-back. Interacts with the co-chaperonin GroES.

The protein resides in the cytoplasm. The catalysed reaction is ATP + H2O + a folded polypeptide = ADP + phosphate + an unfolded polypeptide.. Its function is as follows. Together with its co-chaperonin GroES, plays an essential role in assisting protein folding. The GroEL-GroES system forms a nano-cage that allows encapsulation of the non-native substrate proteins and provides a physical environment optimized to promote and accelerate protein folding. This is Chaperonin GroEL 1 from Frankia casuarinae (strain DSM 45818 / CECT 9043 / HFP020203 / CcI3).